Reading from the N-terminus, the 260-residue chain is tRNA pseudouridine synthase A (260 aa).

Asp-52 functions as the Nucleophile in the catalytic mechanism. Tyr-111 provides a ligand contact to substrate.

Belongs to the tRNA pseudouridine synthase TruA family. In terms of assembly, homodimer.

It carries out the reaction uridine(38/39/40) in tRNA = pseudouridine(38/39/40) in tRNA. Formation of pseudouridine at positions 38, 39 and 40 in the anticodon stem and loop of transfer RNAs. This is tRNA pseudouridine synthase A from Roseobacter denitrificans (strain ATCC 33942 / OCh 114) (Erythrobacter sp. (strain OCh 114)).